The chain runs to 178 residues: uncharacterized protein (178 aa).

This sequence to E.coli YrdD.

This is an uncharacterized protein from Haemophilus influenzae (strain ATCC 51907 / DSM 11121 / KW20 / Rd).